Consider the following 146-residue polypeptide: MEEKDNTLERQLCFLFYVSSKEIIKKYTSYLKEFDLTYTGYIVLLAIGVEEKLNIKTLGARVFLDSGTLTPLLKKLEKKGYVTRTREIDDERNLQIALTTKGKDIKEPLSNISKQVFNEFDMEVDEAIDLKETLQNFVNKHFQQNI.

One can recognise an HTH marR-type domain in the interval 9 to 139 (ERQLCFLFYV…LKETLQNFVN (131 aa)). Positions 55–78 (IKTLGARVFLDSGTLTPLLKKLEK) form a DNA-binding region, H-T-H motif.

The protein belongs to the SarZ family.

The protein resides in the cytoplasm. The polypeptide is HTH-type transcriptional regulator SarZ (sarZ) (Staphylococcus saprophyticus subsp. saprophyticus (strain ATCC 15305 / DSM 20229 / NCIMB 8711 / NCTC 7292 / S-41)).